The chain runs to 466 residues: Glucose-6-phosphate 1-dehydrogenase 1 (466 aa).

NADP(+) contacts are provided by residues serine 48, 88–89 (DV), and lysine 141. 4 residues coordinate substrate: histidine 171, lysine 175, glutamate 209, and aspartate 228. Histidine 233 serves as the catalytic Proton acceptor. Substrate-binding residues include lysine 319 and lysine 324.

Belongs to the glucose-6-phosphate dehydrogenase family.

It catalyses the reaction D-glucose 6-phosphate + NADP(+) = 6-phospho-D-glucono-1,5-lactone + NADPH + H(+). Its pathway is carbohydrate degradation; pentose phosphate pathway; D-ribulose 5-phosphate from D-glucose 6-phosphate (oxidative stage): step 1/3. Its function is as follows. Catalyzes the oxidation of glucose 6-phosphate to 6-phosphogluconolactone. The chain is Glucose-6-phosphate 1-dehydrogenase 1 from Mycobacterium tuberculosis (strain ATCC 25618 / H37Rv).